Here is a 304-residue protein sequence, read N- to C-terminus: Quinolinate synthase (304 aa).

2 residues coordinate iminosuccinate: histidine 24 and serine 41. Residue cysteine 86 coordinates [4Fe-4S] cluster. Iminosuccinate is bound by residues tyrosine 112–asparagine 114 and serine 129. Cysteine 171 is a [4Fe-4S] cluster binding site. Iminosuccinate is bound by residues histidine 197–glutamate 199 and threonine 214. Residue cysteine 259 coordinates [4Fe-4S] cluster.

It belongs to the quinolinate synthase family. Type 2 subfamily. [4Fe-4S] cluster serves as cofactor.

The protein resides in the cytoplasm. The enzyme catalyses iminosuccinate + dihydroxyacetone phosphate = quinolinate + phosphate + 2 H2O + H(+). The protein operates within cofactor biosynthesis; NAD(+) biosynthesis; quinolinate from iminoaspartate: step 1/1. Catalyzes the condensation of iminoaspartate with dihydroxyacetone phosphate to form quinolinate. This is Quinolinate synthase from Geobacter metallireducens (strain ATCC 53774 / DSM 7210 / GS-15).